A 479-amino-acid polypeptide reads, in one-letter code: Odorant receptor coreceptor (479 aa).

At 1–43 (MHVQPTKYHGLVLDLMPNIRLMQGFGHFLFRYVSGPVLIRKLY) the chain is on the cytoplasmic side. Residues 44–64 (SWWNLIMILLQYFAIMGNLVM) traverse the membrane as a helical segment. Residues 65–73 (NTGDVNELT) are Extracellular-facing. Residues 74 to 94 (ANTITTLFFTHSVTKFIYVAV) form a helical membrane-spanning segment. Over 95 to 133 (NSEHFYRTLGIWNQPNSHSLFAESDARYHSIALAKMRKL) the chain is Cytoplasmic. Residues 134 to 154 (LVMVMVTTVLSVVAWITITFF) form a helical membrane-spanning segment. The Extracellular portion of the chain corresponds to 155-187 (GDSVKNVFDKETNETYTVEIPRLPIKALYPWDA). A glycan (N-linked (GlcNAc...) asparagine) is linked at Asn167. Residues 188–208 (MSGVPYFFSFVYQAYFLLFSM) traverse the membrane as a helical segment. The Cytoplasmic segment spans residues 209–344 (CQANLADVMF…VERHKHVVRL (136 aa)). The chain crosses the membrane as a helical span at residues 345–365 (VSAIGETYGAALLLHMLTSTI). Residues 366–383 (KLTLLAYQATKIDALNVY) are Extracellular-facing. Residues 384–404 (GLTVIGYLVYALAQVFLFCIF) traverse the membrane as a helical segment. The Cytoplasmic segment spans residues 405–455 (GNRLIEESSSVMEAAYSCHWYDGSEEAKTFVQIVCQQCQKAMTISGAKFFT). Residues 456-476 (VSLDLFASVLGAVVTYFMVLV) form a helical membrane-spanning segment. At 477 to 479 (QLK) the chain is on the extracellular side.

It belongs to the insect chemoreceptor superfamily. Heteromeric odorant receptor channel (TC 1.A.69) family. Orco subfamily. As to quaternary structure, heterodimer with conventional odorant receptors (ORs). In terms of tissue distribution, expressed in female antenna, maxillary palp and proboscis. Not detected in male tissues.

It localises to the cell membrane. In terms of biological role, odorant coreceptor which complexes with conventional odorant receptors (ORs) to form odorant-sensing units, providing sensitive and prolonged odorant signaling and calcium permeability. Orco is a universal and integral part of the functional odorant receptor, involved in the dendritic localization of other olfactory receptors. Required for detecting a host for blood feeding. Plays a key role in preferred attraction of females for humans over non-human hosts for blood feeding. The chain is Odorant receptor coreceptor from Aedes albopictus (Asian tiger mosquito).